Consider the following 271-residue polypeptide: Phosphatidylinositol transfer protein alpha isoform (271 aa).

A 1,2-diacyl-sn-glycero-3-phospho-(1D-myo-inositol) is bound by residues T59, K61, E86, N90, T97, and K195. At K216 the chain carries N6-acetyllysine. The span at T251–V264 shows a compositional bias: basic and acidic residues. The tract at residues T251 to D271 is disordered.

The protein belongs to the PtdIns transfer protein family. PI transfer class I subfamily. In terms of processing, phosphorylated by PKC in a calcium and phosphatidylserine-dependent manner.

It localises to the cytoplasm. The protein localises to the nucleus. The enzyme catalyses a 1,2-diacyl-sn-glycero-3-phosphocholine(in) = a 1,2-diacyl-sn-glycero-3-phosphocholine(out). It catalyses the reaction a 1,2-diacyl-sn-glycero-3-phospho-(1D-myo-inositol)(in) = a 1,2-diacyl-sn-glycero-3-phospho-(1D-myo-inositol)(out). Catalyzes the transfer of phosphatidylinositol (PI) and phosphatidylcholine (PC) between membranes. Shows a preference for PI and PC containing shorter saturated or monosaturated acyl chains at the sn-1 and sn-2 positions. Preference order for PC is C16:1 &gt; C16:0 &gt; C18:1 &gt; C18:0 &gt; C20:4 and for PI is C16:1 &gt; C16:0 &gt; C18:1 &gt; C18:0 &gt; C20:4 &gt; C20:3. This Mus musculus (Mouse) protein is Phosphatidylinositol transfer protein alpha isoform (Pitpna).